We begin with the raw amino-acid sequence, 163 residues long: Phosphopantetheine adenylyltransferase (163 aa).

Serine 10 contributes to the substrate binding site. Residues serine 10–phenylalanine 11 and histidine 18 each bind ATP. Lysine 42, leucine 74, and arginine 88 together coordinate substrate. Residues glycine 89–arginine 91, glutamate 99, and tyrosine 124–serine 130 contribute to the ATP site.

Belongs to the bacterial CoaD family. As to quaternary structure, homohexamer. Mg(2+) serves as cofactor.

The protein localises to the cytoplasm. It carries out the reaction (R)-4'-phosphopantetheine + ATP + H(+) = 3'-dephospho-CoA + diphosphate. It functions in the pathway cofactor biosynthesis; coenzyme A biosynthesis; CoA from (R)-pantothenate: step 4/5. In terms of biological role, reversibly transfers an adenylyl group from ATP to 4'-phosphopantetheine, yielding dephospho-CoA (dPCoA) and pyrophosphate. The polypeptide is Phosphopantetheine adenylyltransferase (Bacillus mycoides (strain KBAB4) (Bacillus weihenstephanensis)).